Consider the following 243-residue polypeptide: UPF0246 protein SAG2081 (243 aa).

It belongs to the UPF0246 family.

The chain is UPF0246 protein SAG2081 from Streptococcus agalactiae serotype V (strain ATCC BAA-611 / 2603 V/R).